A 318-amino-acid polypeptide reads, in one-letter code: Probable tyrosine phosphatase protein N1 (318 aa).

A Tyrosine-protein phosphatase domain is found at 26–292 (IVRLEHHQVI…LILQPGYYVL (267 aa)). Cysteine 233 acts as the Phosphocysteine intermediate in catalysis.

The protein belongs to the protein-tyrosine phosphatase family.

It catalyses the reaction O-phospho-L-tyrosyl-[protein] + H2O = L-tyrosyl-[protein] + phosphate. In Microplitis demolitor bracovirus (isolate Webb) (MdBV), this protein is Probable tyrosine phosphatase protein N1 (N3).